Here is a 148-residue protein sequence, read N- to C-terminus: Snaclec jerdonuxin subunit beta (148 aa).

Residues Met-1–Ala-23 form the signal peptide. Intrachain disulfides connect Cys-27–Cys-38, Cys-55–Cys-144, and Cys-121–Cys-136. The region spanning Tyr-34–Lys-145 is the C-type lectin domain.

Belongs to the snaclec family. In terms of assembly, tetramer of 4 heterodimers of alpha and beta subunits; disulfide-linked. Expressed by the venom gland.

It localises to the secreted. Snaclec that strongly induces platelet aggregation, in a dose-dependent manner. The protein is Snaclec jerdonuxin subunit beta of Protobothrops jerdonii (Jerdon's pitviper).